Consider the following 941-residue polypeptide: MALTPMMVEYMKTKEEYNDCILFYRLGDFYEMFFDDALTVSRELELVLTGKNCGLEERAPMCGIPHHAAAAYIPRLVTKGYKVAICEQLEDPKQSKGIVKRGVVKVITPGTFIDSNSNLENDNTYLMVISEHEDKFGIAMSDISTGEFKTTSFNNIKMSLLDEISKVSPKEILVDNNISEDLLEEINNVLPVLITKKDFNEFLVSKEELIEQFSDLEVSGLTIEREIPSKVLLKYINETQKMSLTNINLLEQYEIINYMTIDGNSRRNLELTESIREKTKKGSLLWVLDKSATSMGGRTLRKWIDEPLIVKDEIEKRLSGVEEVFNSIGFNEDLRSALKEIYDIERIVGKISNKNVNAKDLLSLKSSLDKLPCIKKLLKDTSSELLKGYYENLDELIDVRDLLNDSIKEDPGLGLKEGNIIKDGYNNLVDELRQSKLHGKEWIAALENREREFTGIKSLKVGYNKVFGYYIEISKSNYNSIPEGRYIRKQTLANAERFITEELKVMEDKILGSEEKLINLEYSIFVEIRDKIEKEISRLKKSARIISDLDGISTLALVALENDYIKPEINTNGLIKITDGRHPVVEKVIGKGDFVSNNTALNQTDKELLLITGPNMAGKSTYMRQVALITLMAQMGSFVPATSANISICDKIFTRIGASDDLAGGKSTFMVEMWEVSNILKNATSNSLVLLDEVGRGTSTYDGLSIAWSVIEYITKNKNLRCKTLFATHYHELVKLEGILPGVKNYSVAVKKLKDSVVFLRKIVEGGADESYGIEVAKLAGLPENVINRAREILEDLESKNTFDINKLSSCSMVSNNTKEIAADSIKNEEDKVISNAQNIDVNETNCNYNEEKILKIETQNSEYEETIKFLKSEIKELQESNKKHNKKHKDASNDNMQINFEVMEKENFIKEISDVDILNLNPMEAMNTLYKVVTDAKKLQ.

613-620 (GPNMAGKS) contacts ATP.

The protein belongs to the DNA mismatch repair MutS family.

This protein is involved in the repair of mismatches in DNA. It is possible that it carries out the mismatch recognition step. This protein has a weak ATPase activity. This Clostridium botulinum (strain Alaska E43 / Type E3) protein is DNA mismatch repair protein MutS.